We begin with the raw amino-acid sequence, 176 residues long: O-acetyl-ADP-ribose deacetylase (176 aa).

The 175-residue stretch at 1–175 (MSGRINVVQG…LYQRLLGQYD (175 aa)) folds into the Macro domain. Residues 11–12 (DI), Asn25, 33–35 (GVD), and 122–126 (STGIY) each bind substrate. The Proton acceptor role is filled by Asp35.

This sequence belongs to the MacroD-type family. YmdB subfamily. Homodimer. Interacts with RNase III.

It catalyses the reaction 3''-O-acetyl-ADP-D-ribose + H2O = ADP-D-ribose + acetate + H(+). The catalysed reaction is 2''-O-acetyl-ADP-D-ribose + H2O = ADP-D-ribose + acetate + H(+). Functionally, deacetylates O-acetyl-ADP ribose to yield ADP-ribose and free acetate. Down-regulates ribonuclease 3 (RNase III) activity. Acts by interacting directly with the region of the ribonuclease that is required for dimerization/activation. The chain is O-acetyl-ADP-ribose deacetylase from Cronobacter turicensis (strain DSM 18703 / CCUG 55852 / LMG 23827 / z3032).